A 109-amino-acid chain; its full sequence is Thiosulfate sulfurtransferase GlpE (109 aa).

The Rhodanese domain occupies 17-105 (HQQTAVLVDI…WHRHFPAEVA (89 aa)). Cys65 acts as the Cysteine persulfide intermediate in catalysis.

It belongs to the GlpE family.

Its subcellular location is the cytoplasm. The enzyme catalyses thiosulfate + hydrogen cyanide = thiocyanate + sulfite + 2 H(+). It catalyses the reaction thiosulfate + [thioredoxin]-dithiol = [thioredoxin]-disulfide + hydrogen sulfide + sulfite + 2 H(+). In terms of biological role, transferase that catalyzes the transfer of sulfur from thiosulfate to thiophilic acceptors such as cyanide or dithiols. May function in a CysM-independent thiosulfate assimilation pathway by catalyzing the conversion of thiosulfate to sulfite, which can then be used for L-cysteine biosynthesis. The protein is Thiosulfate sulfurtransferase GlpE of Klebsiella pneumoniae subsp. pneumoniae (strain ATCC 700721 / MGH 78578).